The sequence spans 307 residues: MGSTMEPPGGAYLHLGAVTSPVGTARMLQLAFGCTTFSLVAHRGGFGGVQGTFCMAAWGFCFAFSVLVVACEFTRLHSCLRLSWGNFTAAFAMLATLLCATAAVIYPLYFTRLECPPEPAGCMVRNFRLAASVFAGLLFLAYAAEVALTRARPGQVASYMATVSGLLKIVQAFVACIIFGALVHESRYGRYVATQWCVAVYSLCFMATVAVVVLSVMGHTGGLGCPFDRLVVVYTFLAVLLYLSAAVIWPVFCFDPKYGEPGRPSDCPRGSCPWDSQLVVAIFTYVNLLLYIVDLAYSQRIRFVPTL.

2 MARVEL domains span residues 17–154 (AVTS…ARPG) and 159–303 (YMAT…RIRF). 7 consecutive transmembrane segments (helical) span residues 53–73 (FCMA…ACEF), 90–110 (AFAM…PLYF), 129–149 (LAAS…VALT), 163–183 (VSGL…GALV), 198–218 (VAVY…SVMG), 232–252 (VVYT…WPVF), and 278–298 (LVVA…LAYS).

Belongs to the MAL family.

The protein resides in the membrane. The polypeptide is Myeloid-associated differentiation marker-like protein 2 (Myadml2) (Rattus norvegicus (Rat)).